The following is a 156-amino-acid chain: Protein-export protein SecB (156 aa).

It belongs to the SecB family. As to quaternary structure, homotetramer, a dimer of dimers. One homotetramer interacts with 1 SecA dimer.

Its subcellular location is the cytoplasm. Functionally, one of the proteins required for the normal export of preproteins out of the cell cytoplasm. It is a molecular chaperone that binds to a subset of precursor proteins, maintaining them in a translocation-competent state. It also specifically binds to its receptor SecA. In Paraburkholderia xenovorans (strain LB400), this protein is Protein-export protein SecB.